A 377-amino-acid chain; its full sequence is Alanine racemase (377 aa).

Residue Lys37 is the Proton acceptor; specific for D-alanine of the active site. Lys37 carries the post-translational modification N6-(pyridoxal phosphate)lysine. Arg135 contributes to the substrate binding site. Tyr271 acts as the Proton acceptor; specific for L-alanine in catalysis. Met319 contributes to the substrate binding site.

It belongs to the alanine racemase family. The cofactor is pyridoxal 5'-phosphate.

The catalysed reaction is L-alanine = D-alanine. It participates in amino-acid biosynthesis; D-alanine biosynthesis; D-alanine from L-alanine: step 1/1. Catalyzes the interconversion of L-alanine and D-alanine. May also act on other amino acids. This is Alanine racemase (alr) from Helicobacter pylori (strain Shi470).